We begin with the raw amino-acid sequence, 293 residues long: Ribosomal protein L11 methyltransferase (293 aa).

The S-adenosyl-L-methionine site is built by T145, G166, D188, and N230.

The protein belongs to the methyltransferase superfamily. PrmA family.

It is found in the cytoplasm. The catalysed reaction is L-lysyl-[protein] + 3 S-adenosyl-L-methionine = N(6),N(6),N(6)-trimethyl-L-lysyl-[protein] + 3 S-adenosyl-L-homocysteine + 3 H(+). In terms of biological role, methylates ribosomal protein L11. This Enterobacter sp. (strain 638) protein is Ribosomal protein L11 methyltransferase.